Here is a 997-residue protein sequence, read N- to C-terminus: Kinesin-like protein KIF19 (997 aa).

A Kinesin motor domain is found at 11-346 (QLTVALRIRP…LTYADRAKNI (336 aa)). 104–111 (GPTGCGKT) contacts ATP. Residues 360–437 (HIAQYTSIIS…REQMDIRRQL (78 aa)) adopt a coiled-coil conformation. A compositionally biased stretch (basic and acidic residues) spans 468–491 (RARKWRDEHRKETYGKDDSEKDSD). The interval 468–503 (RARKWRDEHRKETYGKDDSEKDSDTGDDQSDFIEPP) is disordered. A coiled-coil region spans residues 508-577 (ARETIQILEG…ELEIENTEMQ (70 aa)). Disordered regions lie at residues 662-690 (NLTA…RNPI), 792-811 (GDRL…SMSE), and 848-890 (GGGS…SRSF). 2 stretches are compositionally biased toward basic and acidic residues: residues 792 to 802 (GDRLQPMKERS) and 869 to 880 (QKLEKREESLEV). Residues 861 to 889 (HRTQKKQAQKLEKREESLEVKRRKKRSRS) adopt a coiled-coil conformation.

It belongs to the TRAFAC class myosin-kinesin ATPase superfamily. Kinesin family.

Its subcellular location is the cytoplasm. It localises to the cytoskeleton. The protein resides in the cell projection. The protein localises to the cilium. Its function is as follows. Plus end-directed microtubule-dependent motor protein that regulates the length of motile cilia by mediating depolymerization of microtubules at ciliary tips. This chain is Kinesin-like protein KIF19 (kif19), found in Xenopus laevis (African clawed frog).